We begin with the raw amino-acid sequence, 272 residues long: Formamidopyrimidine-DNA glycosylase (272 aa).

Residue Pro-2 is the Schiff-base intermediate with DNA of the active site. Glu-3 (proton donor) is an active-site residue. Lys-57 functions as the Proton donor; for beta-elimination activity in the catalytic mechanism. Residues His-90, Arg-109, and Lys-150 each contribute to the DNA site. The segment at 235-269 adopts an FPG-type zinc-finger fold; sequence HVYGRAKKKCLLCSSIIQEEKIGQRNTFWCGHCQP. Residue Arg-259 is the Proton donor; for delta-elimination activity of the active site.

The protein belongs to the FPG family. Monomer. The cofactor is Zn(2+).

It catalyses the reaction Hydrolysis of DNA containing ring-opened 7-methylguanine residues, releasing 2,6-diamino-4-hydroxy-5-(N-methyl)formamidopyrimidine.. The enzyme catalyses 2'-deoxyribonucleotide-(2'-deoxyribose 5'-phosphate)-2'-deoxyribonucleotide-DNA = a 3'-end 2'-deoxyribonucleotide-(2,3-dehydro-2,3-deoxyribose 5'-phosphate)-DNA + a 5'-end 5'-phospho-2'-deoxyribonucleoside-DNA + H(+). Involved in base excision repair of DNA damaged by oxidation or by mutagenic agents. Acts as a DNA glycosylase that recognizes and removes damaged bases. Has a preference for oxidized purines, such as 7,8-dihydro-8-oxoguanine (8-oxoG). Has AP (apurinic/apyrimidinic) lyase activity and introduces nicks in the DNA strand. Cleaves the DNA backbone by beta-delta elimination to generate a single-strand break at the site of the removed base with both 3'- and 5'-phosphates. The protein is Formamidopyrimidine-DNA glycosylase of Aliivibrio fischeri (strain ATCC 700601 / ES114) (Vibrio fischeri).